The following is a 272-amino-acid chain: MFDLTGKHVCYVADCGGIALETSKVLMTKNIAKLAILQSTENPQAIAQLQSIKPSTQIFFWTYDVTMAREDMKKYFDEVMVQMDYIDVLINGATLCDENNIDATINTNLTGMMNTVATVLPYMDRKMGGTGGLIVNVTSVIGLDPSPVFCAYSASKFGVIGFTRSLADPLYYSQNGVAVMAVCCGPTRVFVDRELKAFLEYGQSFADRLRRAPCQSTSVCGQNIVNAIERSENGQIWIADKGGLELVKLHWYWHMADQFVHYMQSNDEEDQD.

An NAD(+)-binding site is contributed by 11-34; sequence YVADCGGIALETSKVLMTKNIAKL. Ser139 lines the substrate pocket. The active-site Proton acceptor is the Tyr152.

Belongs to the short-chain dehydrogenases/reductases (SDR) family.

The chain is Alcohol dehydrogenase-related 31 kDa protein (Adhr) from Drosophila melanogaster (Fruit fly).